Reading from the N-terminus, the 183-residue chain is Integrase-like protein y4lS (183 aa).

The region spanning 2–136 (ARIGYARTFT…EGIAAARKRG (135 aa)) is the Resolvase/invertase-type recombinase catalytic domain.

Belongs to the site-specific recombinase resolvase family.

This Sinorhizobium fredii (strain NBRC 101917 / NGR234) protein is Integrase-like protein y4lS.